A 236-amino-acid chain; its full sequence is Thiamine import ATP-binding protein ThiQ (236 aa).

An ABC transporter domain is found at 2-230 (LKLEKITYLY…SAAKASVLGI (229 aa)). Residue 32–39 (GPSGAGKS) participates in ATP binding.

The protein belongs to the ABC transporter superfamily. Thiamine importer (TC 3.A.1.19.1) family. In terms of assembly, the complex is composed of two ATP-binding proteins (ThiQ), two transmembrane proteins (ThiP) and a solute-binding protein (ThiB).

It is found in the cell inner membrane. It carries out the reaction thiamine(out) + ATP + H2O = thiamine(in) + ADP + phosphate + H(+). Its function is as follows. Part of the ABC transporter complex ThiBPQ involved in thiamine import. Responsible for energy coupling to the transport system. This Yersinia pestis bv. Antiqua (strain Antiqua) protein is Thiamine import ATP-binding protein ThiQ.